The primary structure comprises 258 residues: Regulatory protein RecX (258 aa).

Belongs to the RecX family.

The protein localises to the cytoplasm. Modulates RecA activity. The protein is Regulatory protein RecX of Streptococcus pneumoniae (strain Hungary19A-6).